Here is a 417-residue protein sequence, read N- to C-terminus: Serine hydroxymethyltransferase (417 aa).

(6S)-5,6,7,8-tetrahydrofolate-binding positions include Leu121 and 125-127 (GHL). N6-(pyridoxal phosphate)lysine is present on Lys229. 355–357 (SPF) is a binding site for (6S)-5,6,7,8-tetrahydrofolate.

Belongs to the SHMT family. As to quaternary structure, homodimer. Pyridoxal 5'-phosphate is required as a cofactor.

Its subcellular location is the cytoplasm. The catalysed reaction is (6R)-5,10-methylene-5,6,7,8-tetrahydrofolate + glycine + H2O = (6S)-5,6,7,8-tetrahydrofolate + L-serine. Its pathway is one-carbon metabolism; tetrahydrofolate interconversion. The protein operates within amino-acid biosynthesis; glycine biosynthesis; glycine from L-serine: step 1/1. In terms of biological role, catalyzes the reversible interconversion of serine and glycine with tetrahydrofolate (THF) serving as the one-carbon carrier. This reaction serves as the major source of one-carbon groups required for the biosynthesis of purines, thymidylate, methionine, and other important biomolecules. Also exhibits THF-independent aldolase activity toward beta-hydroxyamino acids, producing glycine and aldehydes, via a retro-aldol mechanism. In Sodalis glossinidius (strain morsitans), this protein is Serine hydroxymethyltransferase.